We begin with the raw amino-acid sequence, 333 residues long: T-cell surface glycoprotein CD1b (333 aa).

Positions 1-18 (MLLLPFQLLAVLFPGGNS) are cleaved as a signal peptide. The Extracellular segment spans residues 19 to 303 (EHAFQGPTSF…YWSNPTSIGS (285 aa)). Asn-38, Asn-75, and Asn-146 each carry an N-linked (GlcNAc...) asparagine glycan. 3 disulfide bridges follow: Cys-120–Cys-184, Cys-149–Cys-163, and Cys-224–Cys-279. The Ig-like domain maps to 185 to 295 (PRYLLGVLNA…LEGQDIILYW (111 aa)). N-linked (GlcNAc...) asparagine glycosylation is present at Asn-258. Residues 304 to 324 (IVLAIIVPSLLLLLCLALWYM) traverse the membrane as a helical segment. Topologically, residues 325–333 (RRRSYQNIP) are cytoplasmic. The Internalization signal motif lies at 329 to 332 (YQNI).

As to quaternary structure, heterodimer with B2M (beta-2-microglobulin). Interacts with saposin C. In terms of tissue distribution, expressed in lymphocytes, spleen, lung, liver, kidney and heart.

Its subcellular location is the cell membrane. The protein resides in the endosome membrane. It localises to the lysosome membrane. Antigen-presenting protein that binds self and non-self lipid and glycolipid antigens and presents them to T-cell receptors on natural killer T-cells. The polypeptide is T-cell surface glycoprotein CD1b (CD1B) (Aotus nancymaae (Ma's night monkey)).